We begin with the raw amino-acid sequence, 678 residues long: Glycine--tRNA ligase beta subunit (678 aa).

Belongs to the class-II aminoacyl-tRNA synthetase family. Tetramer of two alpha and two beta subunits.

Its subcellular location is the cytoplasm. It carries out the reaction tRNA(Gly) + glycine + ATP = glycyl-tRNA(Gly) + AMP + diphosphate. The sequence is that of Glycine--tRNA ligase beta subunit from Streptococcus pneumoniae (strain ATCC 700669 / Spain 23F-1).